A 197-amino-acid chain; its full sequence is Ribonuclease HII (197 aa).

The 189-residue stretch at 9 to 197 (KLIAGVDEVG…APVKKALEQF (189 aa)) folds into the RNase H type-2 domain. A divalent metal cation-binding residues include aspartate 15, glutamate 16, and aspartate 107.

It belongs to the RNase HII family. Mn(2+) is required as a cofactor. Requires Mg(2+) as cofactor.

Its subcellular location is the cytoplasm. It carries out the reaction Endonucleolytic cleavage to 5'-phosphomonoester.. In terms of biological role, endonuclease that specifically degrades the RNA of RNA-DNA hybrids. The sequence is that of Ribonuclease HII from Haemophilus influenzae (strain PittEE).